Reading from the N-terminus, the 175-residue chain is Ribosome maturation factor RimM (175 aa).

The PRC barrel domain maps to 97 to 169; sequence EDKFYFHEII…TVRVITPEGL (73 aa).

Belongs to the RimM family. Binds ribosomal protein uS19.

The protein localises to the cytoplasm. In terms of biological role, an accessory protein needed during the final step in the assembly of 30S ribosomal subunit, possibly for assembly of the head region. Essential for efficient processing of 16S rRNA. May be needed both before and after RbfA during the maturation of 16S rRNA. It has affinity for free ribosomal 30S subunits but not for 70S ribosomes. This is Ribosome maturation factor RimM from Christiangramia forsetii (strain DSM 17595 / CGMCC 1.15422 / KT0803) (Gramella forsetii).